Here is a 312-residue protein sequence, read N- to C-terminus: Methionyl-tRNA formyltransferase (312 aa).

Ser110–Pro113 contributes to the (6S)-5,6,7,8-tetrahydrofolate binding site.

It belongs to the Fmt family.

It carries out the reaction L-methionyl-tRNA(fMet) + (6R)-10-formyltetrahydrofolate = N-formyl-L-methionyl-tRNA(fMet) + (6S)-5,6,7,8-tetrahydrofolate + H(+). Its function is as follows. Attaches a formyl group to the free amino group of methionyl-tRNA(fMet). The formyl group appears to play a dual role in the initiator identity of N-formylmethionyl-tRNA by promoting its recognition by IF2 and preventing the misappropriation of this tRNA by the elongation apparatus. The polypeptide is Methionyl-tRNA formyltransferase (Streptococcus suis (strain 05ZYH33)).